The following is a 195-amino-acid chain: Magnetosome membrane protein 22 (195 aa).

Residues 1-28 are compositionally biased toward low complexity; it reads MAAQTAASEAPAPAAAPADSPTTAGPTP. The segment at 1–31 is disordered; sequence MAAQTAASEAPAPAAAPADSPTTAGPTPDSV. The next 3 membrane-spanning stretches (helical) occupy residues 45–65, 90–110, and 115–135; these read VLAA…AAVV, SVIA…AVAV, and LIPG…AGAT.

The protein localises to the magnetosome membrane. This Magnetospirillum gryphiswaldense (strain DSM 6361 / JCM 21280 / NBRC 15271 / MSR-1) protein is Magnetosome membrane protein 22.